The primary structure comprises 135 residues: Ribonuclease VapC5 (135 aa).

One can recognise a PINc domain in the interval 9 to 130 (VLDTSVFIAT…FAALDGAASV (122 aa)). 2 residues coordinate Mg(2+): D11 and D100.

The protein belongs to the PINc/VapC protein family. In terms of assembly, forms a complex with VapB5. It depends on Mg(2+) as a cofactor.

Its subcellular location is the secreted. Probable toxic component of a type II toxin-antitoxin (TA) system. The cognate antitoxin is VapB5. Has limited RNase activity on substrates; activity is seen with a VapC5-VapB5 complex. This Mycobacterium tuberculosis (strain ATCC 25618 / H37Rv) protein is Ribonuclease VapC5.